We begin with the raw amino-acid sequence, 473 residues long: Pre-mRNA-splicing factor PRP46 (473 aa).

The span at 1–14 shows a compositional bias: polar residues; the sequence is MSTSLETPSGTSAG. 2 disordered regions span residues 1-21 and 103-126; these read MSTS…VASG and GPNV…QAVA. WD repeat units lie at residues 180–219, 222–261, 264–303, 306–347, 349–388, 391–429, and 440–473; these read GHMG…LKLS, GHIS…VIRH, GHFS…NIFT, GHTS…NTLT, HKKS…FVNN, GHEA…PFQH, and DAEA…SEQA.

It belongs to the WD repeat PRL1/PRL2 family. Associated with the spliceosome.

Its subcellular location is the cytoplasm. It localises to the nucleus. In terms of biological role, involved in pre-mRNA splicing and required for cell cycle progression at G2/M. In Cryptococcus neoformans var. neoformans serotype D (strain B-3501A) (Filobasidiella neoformans), this protein is Pre-mRNA-splicing factor PRP46 (PRP46).